We begin with the raw amino-acid sequence, 239 residues long: Acyl-protein thioesterase 1 (239 aa).

Residues Ser124, Asp180, and His213 each act as charge relay system in the active site.

The protein belongs to the AB hydrolase superfamily. AB hydrolase 2 family.

The protein localises to the cytoplasm. Its subcellular location is the nucleus. The catalysed reaction is S-hexadecanoyl-L-cysteinyl-[protein] + H2O = L-cysteinyl-[protein] + hexadecanoate + H(+). Its function is as follows. Hydrolyzes fatty acids from S-acylated cysteine residues in proteins with a strong preference for palmitoylated G-alpha proteins over other acyl substrates. Mediates the deacylation of G-alpha proteins such as GPA1 in vivo, but has weak or no activity toward palmitoylated Ras proteins. Has weak lysophospholipase activity in vitro; however such activity may not exist in vivo. This chain is Acyl-protein thioesterase 1, found in Emericella nidulans (strain FGSC A4 / ATCC 38163 / CBS 112.46 / NRRL 194 / M139) (Aspergillus nidulans).